A 358-amino-acid polypeptide reads, in one-letter code: Photosystem II protein D1 2 (358 aa).

Helical transmembrane passes span 28 to 45, 117 to 132, and 141 to 155; these read YVGWFGVLMIPCLLAATI, HFLIGISAYMGRQWEL, and WICVAYAAPLSAAMV. Histidine 117 serves as a coordination point for chlorophyll a. Residue tyrosine 125 participates in pheophytin a binding. Residues aspartate 169 and glutamate 188 each contribute to the [CaMn4O5] cluster site. The helical transmembrane segment at 196–217 threads the bilayer; sequence FHMLGVAGVFGGSLFSAMHGSL. Chlorophyll a is bound at residue histidine 197. Residues histidine 214 and 263–264 each bind a quinone; that span reads SF. Fe cation is bound at residue histidine 214. A Fe cation-binding site is contributed by histidine 271. Residues 273 to 287 traverse the membrane as a helical segment; the sequence is FLAAWPVVGIWFTSM. [CaMn4O5] cluster contacts are provided by histidine 331, glutamate 332, aspartate 341, and alanine 343. A propeptide spanning residues 344-358 is cleaved from the precursor; the sequence is TTESAPVALQAPAVG.

Belongs to the reaction center PufL/M/PsbA/D family. In terms of assembly, PSII is composed of 1 copy each of membrane proteins PsbA, PsbB, PsbC, PsbD, PsbE, PsbF, PsbH, PsbI, PsbJ, PsbK, PsbL, PsbM, PsbT, PsbX, PsbY, PsbZ, Psb30/Ycf12, peripheral proteins PsbO, CyanoQ (PsbQ), PsbU, PsbV and a large number of cofactors. It forms dimeric complexes. The D1/D2 heterodimer binds P680, chlorophylls that are the primary electron donor of PSII, and subsequent electron acceptors. It shares a non-heme iron and each subunit binds pheophytin, quinone, additional chlorophylls, carotenoids and lipids. D1 provides most of the ligands for the Mn4-Ca-O5 cluster of the oxygen-evolving complex (OEC). There is also a Cl(-1) ion associated with D1 and D2, which is required for oxygen evolution. The PSII complex binds additional chlorophylls, carotenoids and specific lipids. is required as a cofactor. Tyr-160 forms a radical intermediate that is referred to as redox-active TyrZ, YZ or Y-Z. In terms of processing, C-terminally processed by CtpA; processing is essential to allow assembly of the oxygen-evolving complex and thus photosynthetic growth.

Its subcellular location is the cellular thylakoid membrane. It catalyses the reaction 2 a plastoquinone + 4 hnu + 2 H2O = 2 a plastoquinol + O2. Photosystem II (PSII) is a light-driven water:plastoquinone oxidoreductase that uses light energy to abstract electrons from H(2)O, generating O(2) and a proton gradient subsequently used for ATP formation. It consists of a core antenna complex that captures photons, and an electron transfer chain that converts photonic excitation into a charge separation. The D1/D2 (PsbA/PsbD) reaction center heterodimer binds P680, the primary electron donor of PSII as well as several subsequent electron acceptors. The sequence is that of Photosystem II protein D1 2 from Synechococcus sp. (strain RCC307).